A 501-amino-acid chain; its full sequence is Aldehyde dehydrogenase 1A1 (501 aa).

S2 bears the N-acetylserine mark. N6-acetyllysine is present on residues K91 and K128. NAD(+) contacts are provided by residues 167–170, 193–196, 226–227, and 246–247; these read IPWN, KPAE, GP, and GS. At K252 the chain carries N6-acetyllysine. E269 acts as the Proton acceptor in catalysis. Position 269–271 (269–271) interacts with NAD(+); the sequence is ELG. C303 functions as the Nucleophile in the catalytic mechanism. The mediates interaction with PRMT3 stretch occupies residues 336 to 501; sequence LNSGINQGPQ…VAIKISQKNS (166 aa). Residue 349–353 coordinates NAD(+); sequence EQHDK. K353 and K367 each carry N6-acetyllysine. Residue 400 to 402 participates in NAD(+) binding; it reads EIF. At K410 the chain carries N6-acetyllysine. S413 carries the phosphoserine modification. N6-acetyllysine occurs at positions 419, 435, and 495.

It belongs to the aldehyde dehydrogenase family. In terms of assembly, homotetramer. Interacts with PRMT3; the interaction is direct, inhibits ALDH1A1 aldehyde dehydrogenase activity and is independent of the methyltransferase activity of PRMT3. Post-translationally, the N-terminus is blocked most probably by acetylation.

The protein localises to the cytoplasm. Its subcellular location is the cytosol. The protein resides in the cell projection. It localises to the axon. It carries out the reaction an aldehyde + NAD(+) + H2O = a carboxylate + NADH + 2 H(+). The enzyme catalyses all-trans-retinal + NAD(+) + H2O = all-trans-retinoate + NADH + 2 H(+). It catalyses the reaction 9-cis-retinal + NAD(+) + H2O = 9-cis-retinoate + NADH + 2 H(+). The catalysed reaction is 11-cis-retinal + NAD(+) + H2O = 11-cis-retinoate + NADH + 2 H(+). It carries out the reaction 13-cis-retinal + NAD(+) + H2O = 13-cis-retinoate + NADH + 2 H(+). The enzyme catalyses 3-deoxyglucosone + NAD(+) + H2O = 2-dehydro-3-deoxy-D-gluconate + NADH + 2 H(+). It catalyses the reaction (E)-4-hydroxynon-2-enal + NAD(+) + H2O = (E)-4-hydroxynon-2-enoate + NADH + 2 H(+). The catalysed reaction is malonaldehyde + NAD(+) + H2O = 3-oxopropanoate + NADH + 2 H(+). It carries out the reaction hexanal + NAD(+) + H2O = hexanoate + NADH + 2 H(+). The enzyme catalyses propanal + NAD(+) + H2O = propanoate + NADH + 2 H(+). It catalyses the reaction acetaldehyde + NAD(+) + H2O = acetate + NADH + 2 H(+). The catalysed reaction is benzaldehyde + NAD(+) + H2O = benzoate + NADH + 2 H(+). It carries out the reaction 4-aminobutanal + NAD(+) + H2O = 4-aminobutanoate + NADH + 2 H(+). The protein operates within cofactor metabolism; retinol metabolism. In terms of biological role, cytosolic dehydrogenase that catalyzes the irreversible oxidation of a wide range of aldehydes to their corresponding carboxylic acid. Functions downstream of retinol dehydrogenases and catalyzes the oxidation of retinaldehyde into retinoic acid, the second step in the oxidation of retinol/vitamin A into retinoic acid. This pathway is crucial to control the levels of retinol and retinoic acid, two important molecules which excess can be teratogenic and cytotoxic. Also oxidizes aldehydes resulting from lipid peroxidation like (E)-4-hydroxynon-2-enal/HNE, malonaldehyde and hexanal that form protein adducts and are highly cytotoxic. By participating for instance to the clearance of (E)-4-hydroxynon-2-enal/HNE in the lens epithelium prevents the formation of HNE-protein adducts and lens opacification. Also functions downstream of fructosamine-3-kinase in the fructosamine degradation pathway by catalyzing the oxidation of 3-deoxyglucosone, the carbohydrate product of fructosamine 3-phosphate decomposition, which is itself a potent glycating agent that may react with lysine and arginine side-chains of proteins. Also has an aminobutyraldehyde dehydrogenase activity and is probably part of an alternative pathway for the biosynthesis of GABA/4-aminobutanoate in midbrain, thereby playing a role in GABAergic synaptic transmission. This Mesocricetus auratus (Golden hamster) protein is Aldehyde dehydrogenase 1A1.